The following is a 433-amino-acid chain: Trigger factor (433 aa).

Residues 161–246 (DSRVTIDFIG…LHKVEAQELP (86 aa)) form the PPIase FKBP-type domain.

The protein belongs to the FKBP-type PPIase family. Tig subfamily.

It is found in the cytoplasm. The enzyme catalyses [protein]-peptidylproline (omega=180) = [protein]-peptidylproline (omega=0). In terms of biological role, involved in protein export. Acts as a chaperone by maintaining the newly synthesized protein in an open conformation. Functions as a peptidyl-prolyl cis-trans isomerase. The polypeptide is Trigger factor (Photobacterium profundum (strain SS9)).